The primary structure comprises 410 residues: Phosphoglycerate kinase (410 aa).

Substrate is bound by residues 24–26, R40, 63–66, R122, and R162; these read DLN and HLGR. ATP is bound by residues K212, G300, E331, and 360–363; that span reads GGDS.

This sequence belongs to the phosphoglycerate kinase family. In terms of assembly, monomer.

The protein resides in the cytoplasm. The enzyme catalyses (2R)-3-phosphoglycerate + ATP = (2R)-3-phospho-glyceroyl phosphate + ADP. The protein operates within carbohydrate degradation; glycolysis; pyruvate from D-glyceraldehyde 3-phosphate: step 2/5. This is Phosphoglycerate kinase from Nocardia farcinica (strain IFM 10152).